Reading from the N-terminus, the 378-residue chain is Probable endopolygalacturonase E (378 aa).

The N-terminal stretch at 1 to 19 (MVTSSSVIVLTLWAALVSA) is a signal peptide. The propeptide occupies 20–38 (SPVADPLVTPAPKLEDLEK). C43 and C61 are oxidised to a cystine. PbH1 repeat units lie at residues 103–125 (GPLV…YLNG), 174–204 (STYL…DIGD), and 205–226 (STYI…AVNS). D219 serves as the catalytic Proton donor. Residues C221 and C237 are joined by a disulfide bond. The active site involves H241. PbH1 repeat units follow at residues 256 to 277 (VKNV…RIKT), 285 to 307 (VSEV…VVEQ), and 317 to 345 (TDGI…YIVC). N258 carries an N-linked (GlcNAc...) asparagine glycan. 2 cysteine pairs are disulfide-bonded: C345-C350 and C369-C378.

This sequence belongs to the glycosyl hydrolase 28 family.

Its subcellular location is the secreted. It catalyses the reaction (1,4-alpha-D-galacturonosyl)n+m + H2O = (1,4-alpha-D-galacturonosyl)n + (1,4-alpha-D-galacturonosyl)m.. In terms of biological role, involved in maceration and soft-rotting of plant tissue. Hydrolyzes the 1,4-alpha glycosidic bonds of de-esterified pectate in the smooth region of the plant cell wall. The chain is Probable endopolygalacturonase E (pgaE) from Aspergillus niger (strain ATCC MYA-4892 / CBS 513.88 / FGSC A1513).